The chain runs to 642 residues: tRNA uridine 5-carboxymethylaminomethyl modification enzyme MnmG (642 aa).

24–29 contacts FAD; sequence GGGHAG. 284–298 is a binding site for NAD(+); it reads GPRYCPSIEDKIHRF.

It belongs to the MnmG family. As to quaternary structure, homodimer. Heterotetramer of two MnmE and two MnmG subunits. The cofactor is FAD.

The protein localises to the cytoplasm. In terms of biological role, NAD-binding protein involved in the addition of a carboxymethylaminomethyl (cmnm) group at the wobble position (U34) of certain tRNAs, forming tRNA-cmnm(5)s(2)U34. This Psychrobacter sp. (strain PRwf-1) protein is tRNA uridine 5-carboxymethylaminomethyl modification enzyme MnmG.